Consider the following 85-residue polypeptide: Putative membrane protein insertion efficiency factor (85 aa).

It belongs to the UPF0161 family.

It is found in the cell inner membrane. Functionally, could be involved in insertion of integral membrane proteins into the membrane. This Shewanella sediminis (strain HAW-EB3) protein is Putative membrane protein insertion efficiency factor.